Reading from the N-terminus, the 555-residue chain is Sulfite reductase [ferredoxin] 2 (555 aa).

Positions 1 to 31 are disordered; the sequence is MTTARPAKARNEGQWALGNREPLNPNEEMKQ. Residues 69-161 constitute a cross-link (3'-(S-cysteinyl)-tyrosine (Tyr-Cys)); it reads YTQREQGYDG…AVGLRTTEAC (93 aa). [4Fe-4S] cluster-binding residues include Cys-417, Cys-423, Cys-463, and Cys-467. A siroheme-binding site is contributed by Cys-467.

Belongs to the nitrite and sulfite reductase 4Fe-4S domain family. As to quaternary structure, monomer. It depends on siroheme as a cofactor. [4Fe-4S] cluster serves as cofactor.

It catalyses the reaction hydrogen sulfide + 6 oxidized [2Fe-2S]-[ferredoxin] + 3 H2O = sulfite + 6 reduced [2Fe-2S]-[ferredoxin] + 7 H(+). In terms of biological role, catalyzes the reduction of sulfite to sulfide, a step in the biosynthesis of sulfur-containing amino acids and cofactors. This is Sulfite reductase [ferredoxin] 2 (sir2) from Mycolicibacterium paratuberculosis (strain ATCC BAA-968 / K-10) (Mycobacterium paratuberculosis).